The following is a 1305-amino-acid chain: Cyclin-G-associated kinase (1305 aa).

The residue at position 2 (serine 2) is an N-acetylserine. Phosphoserine is present on residues serine 2 and serine 16. In terms of domain architecture, Protein kinase spans leucine 40–alanine 317. ATP-binding positions include leucine 46 to valine 54 and lysine 69. The active-site Proton acceptor is aspartate 173. A Phosphatase tensin-type domain is found at serine 397–glutamate 564. Position 454 is a phosphoserine (serine 454). The C2 tensin-type domain occupies serine 570 to glutamate 708. Disordered stretches follow at residues valine 707 to isoleucine 732 and phenylalanine 747 to threonine 854. Serine 768 is modified (phosphoserine). Threonine 774 carries the phosphothreonine modification. A compositionally biased stretch (polar residues) spans serine 776 to phenylalanine 789. Serine 781 bears the Phosphoserine mark. Threonine 792 carries the post-translational modification Phosphothreonine. Residues leucine 805 to valine 816 show a composition bias toward polar residues. Residues serine 809, serine 824, and serine 827 each carry the phosphoserine modification. Acidic residues predominate over residues aspartate 822 to alanine 832. Residues serine 836–proline 848 show a composition bias toward basic and acidic residues. Serine 938 is subject to Phosphoserine. The tract at residues aspartate 1037–arginine 1139 is disordered. Positions aspartate 1084 to leucine 1099 are enriched in low complexity. Positions threonine 1111 to proline 1132 are enriched in polar residues. Omega-N-methylarginine is present on arginine 1122. Position 1171 is a phosphoserine (serine 1171). In terms of domain architecture, J spans serine 1241–phenylalanine 1305.

It belongs to the protein kinase superfamily. Ser/Thr protein kinase family.

It is found in the cytoplasm. Its subcellular location is the perinuclear region. It localises to the golgi apparatus. The protein resides in the trans-Golgi network. The protein localises to the cell junction. It is found in the focal adhesion. Its subcellular location is the cytoplasmic vesicle. It localises to the clathrin-coated vesicle. It catalyses the reaction L-seryl-[protein] + ATP = O-phospho-L-seryl-[protein] + ADP + H(+). The catalysed reaction is L-threonyl-[protein] + ATP = O-phospho-L-threonyl-[protein] + ADP + H(+). In terms of biological role, associates with cyclin G and CDK5. Seems to act as an auxilin homolog that is involved in the uncoating of clathrin-coated vesicles by Hsc70 in non-neuronal cells. Expression oscillates slightly during the cell cycle, peaking at G1. May play a role in clathrin-mediated endocytosis and intracellular trafficking, and in the dynamics of clathrin assembly/disassembly. The chain is Cyclin-G-associated kinase from Mus musculus (Mouse).